The sequence spans 341 residues: MATIKDVAKRANVSTTTVSHVINKTRFVAEETRNAVWAAIKELHYSPSAVARSLKVNHTKSIGLLATSSEAAYFAEIIESVEKSCFQKGYTLILGNAWNDLEKQRAYLSMMAQKRVDGLLVMCSEYPDSVLSMLEEYRHIPMVVMDWGEAKADFTDAVIDNAFQGGYIAGRYLIERGHREIGVIPGPLERNTGAGRLAGFMQAMKEAHISVPENWIVQGDFEPESGYRAMQQILNQQHRPTAVFCGGDIMAMGAICAADEMGLRVPQDISLIGYDNVRNARYFSPALTTIHQPKDSLGEAAFNMLLDRIVNKREESQSIEVHPRLVERRSVADGPFVDYRR.

Positions 2 to 56 (ATIKDVAKRANVSTTTVSHVINKTRFVAEETRNAVWAAIKELHYSPSAVARSLKV) constitute an HTH lacI-type domain. The H-T-H motif DNA-binding region spans 4 to 23 (IKDVAKRANVSTTTVSHVIN). A DNA-binding region spans residues 48–56 (SAVARSLKV). Hypoxanthine-binding residues include Y73, R190, T192, F221, and D275.

Homodimer.

It participates in purine metabolism; purine nucleotide biosynthesis [regulation]. Its function is as follows. Is the main repressor of the genes involved in the de novo synthesis of purine nucleotides, regulating purB, purC, purEK, purF, purHD, purL, purMN and guaBA expression. PurR is allosterically activated to bind its cognate DNA by binding the purine corepressors, hypoxanthine or guanine, thereby effecting transcription repression. In Klebsiella pneumoniae subsp. pneumoniae (strain ATCC 700721 / MGH 78578), this protein is HTH-type transcriptional repressor PurR.